Here is a 62-residue protein sequence, read N- to C-terminus: MQGTWLPPSFLAVCDTEEVSLFLELCFKIHVTCKAVLICDYGPMELGQSLWEAEGKDPGHFR.

This is an uncharacterized protein from Homo sapiens (Human).